A 402-amino-acid polypeptide reads, in one-letter code: Deoxyguanosinetriphosphate triphosphohydrolase-like protein (402 aa).

The HD domain maps to 69–217 (RLTHSLEVAQ…AAIADDIAYD (149 aa)).

This sequence belongs to the dGTPase family. Type 2 subfamily.

The protein is Deoxyguanosinetriphosphate triphosphohydrolase-like protein of Bradyrhizobium diazoefficiens (strain JCM 10833 / BCRC 13528 / IAM 13628 / NBRC 14792 / USDA 110).